Reading from the N-terminus, the 389-residue chain is Cuticlin-3 (389 aa).

Positions 1-19 are cleaved as a signal peptide; it reads MARYSLGLGLCLLVASVSA. Topologically, residues 20–354 are extracellular; it reads IPVDNNVEGE…ELCISSFHIS (335 aa). The 246-residue stretch at 33 to 278 folds into the ZP domain; it reads ECGPTSITVN…PTCSEPQGFG (246 aa). Asparagine 284 carries an N-linked (GlcNAc...) asparagine glycan. Residues 355-375 form a helical membrane-spanning segment; that stretch reads VVTVFLGLTVFVAIFITYMIV. Topologically, residues 376 to 389 are cytoplasmic; it reads SRMMVPSDKMQSAC.

Its subcellular location is the cell membrane. Its function is as follows. Plays a role in alae formation in L1 larvae. The protein is Cuticlin-3 of Caenorhabditis elegans.